A 189-amino-acid chain; its full sequence is GMP synthase [glutamine-hydrolyzing] subunit A (189 aa).

The 185-residue stretch at 5–189 (KILVVNNYGQ…TNFFEVCDRY (185 aa)) folds into the Glutamine amidotransferase type-1 domain. The active-site Nucleophile is cysteine 79. Residues histidine 166 and glutamate 168 contribute to the active site.

As to quaternary structure, heterodimer composed of a glutamine amidotransferase subunit (A) and a GMP-binding subunit (B).

The catalysed reaction is XMP + L-glutamine + ATP + H2O = GMP + L-glutamate + AMP + diphosphate + 2 H(+). Its pathway is purine metabolism; GMP biosynthesis; GMP from XMP (L-Gln route): step 1/1. Functionally, catalyzes the synthesis of GMP from XMP. This chain is GMP synthase [glutamine-hydrolyzing] subunit A, found in Methanosarcina acetivorans (strain ATCC 35395 / DSM 2834 / JCM 12185 / C2A).